A 160-amino-acid chain; its full sequence is Bacterial microcompartment shell protein PduK (160 aa).

In terms of domain architecture, BMC spans 11-96 (SLGLLEVCGL…PGEGILLAET (86 aa)).

The protein belongs to the bacterial microcompartments protein family. Interacts with shell proteins PduA and PduP and assembly protein PduM. The cofactor is Fe cation.

Its subcellular location is the bacterial microcompartment. It functions in the pathway polyol metabolism; 1,2-propanediol degradation. In terms of biological role, a minor shell protein of the bacterial microcompartment (BMC) dedicated to 1,2-propanediol (1,2-PD) degradation. The isolated BMC shell component protein ratio for J:A:B':B:K:T:U is approximately 15:10:7:6:1:1:2. Not required for structural integrity of BMCs nor to mitigate propionaldehyde toxicity, it might be involved in spatial organization of BMCs. Its function is as follows. The 1,2-PD-specific bacterial microcompartment (BMC) concentrates low levels of 1,2-PD catabolic enzymes, concentrates volatile reaction intermediates thus enhancing pathway flux and keeps the level of toxic, mutagenic propionaldehyde low. The sequence is that of Bacterial microcompartment shell protein PduK from Salmonella typhimurium (strain LT2 / SGSC1412 / ATCC 700720).